Consider the following 253-residue polypeptide: Ribosomal RNA small subunit methyltransferase I (253 aa).

Residues 230 to 246 (RKEQRSQRSFSKGDKKP) are compositionally biased toward basic and acidic residues. The disordered stretch occupies residues 230–253 (RKEQRSQRSFSKGDKKPSFKRFKK).

It belongs to the methyltransferase superfamily. RsmI family.

The protein localises to the cytoplasm. The enzyme catalyses cytidine(1402) in 16S rRNA + S-adenosyl-L-methionine = 2'-O-methylcytidine(1402) in 16S rRNA + S-adenosyl-L-homocysteine + H(+). In terms of biological role, catalyzes the 2'-O-methylation of the ribose of cytidine 1402 (C1402) in 16S rRNA. The chain is Ribosomal RNA small subunit methyltransferase I from Leptospira borgpetersenii serovar Hardjo-bovis (strain L550).